The primary structure comprises 245 residues: Zinc import ATP-binding protein ZnuC (245 aa).

In terms of domain architecture, ABC transporter spans L27–N244. G59–T66 provides a ligand contact to ATP.

Belongs to the ABC transporter superfamily. Zinc importer (TC 3.A.1.15.5) family. In terms of assembly, the complex is composed of two ATP-binding proteins (ZnuC), two transmembrane proteins (ZnuB) and a solute-binding protein (ZnuA).

The protein localises to the cell inner membrane. The enzyme catalyses Zn(2+)(out) + ATP(in) + H2O(in) = Zn(2+)(in) + ADP(in) + phosphate(in) + H(+)(in). Part of the ABC transporter complex ZnuABC involved in zinc import. Responsible for energy coupling to the transport system. The protein is Zinc import ATP-binding protein ZnuC of Anaplasma marginale (strain St. Maries).